The sequence spans 300 residues: N-carbamoylputrescine amidase (300 aa).

Residues 8 to 266 (VTVAALQFAC…EAVLVAQFDL (259 aa)) enclose the CN hydrolase domain. The Proton acceptor role is filled by Glu47. Lys120 serves as the catalytic Proton donor. The active-site Nucleophile is Cys157.

Belongs to the carbon-nitrogen hydrolase superfamily. In terms of assembly, homooctamer.

It catalyses the reaction N-carbamoylputrescine + H2O + 2 H(+) = putrescine + NH4(+) + CO2. The protein operates within amine and polyamine biosynthesis; putrescine biosynthesis via agmatine pathway; putrescine from N-carbamoylputrescine (amidase route): step 1/1. In terms of biological role, involved in polyamine biosynthesis. The protein is N-carbamoylputrescine amidase (CPA) of Solanum tuberosum (Potato).